The primary structure comprises 346 residues: Dimethylallyltranstransferase (346 aa).

Isopentenyl diphosphate is bound by residues Lys96, Arg99, and His128. Positions 135 and 141 each coordinate Mg(2+). Arg147 contributes to the isopentenyl diphosphate binding site.

It belongs to the FPP/GGPP synthase family. It depends on Mg(2+) as a cofactor.

It carries out the reaction isopentenyl diphosphate + dimethylallyl diphosphate = (2E)-geranyl diphosphate + diphosphate. It participates in isoprenoid biosynthesis; geranyl diphosphate biosynthesis; geranyl diphosphate from dimethylallyl diphosphate and isopentenyl diphosphate: step 1/1. Functionally, prenyltransferase involved in the biosynthesis of ambiguines, a family of hapalindole-type alkaloids. Catalyzes the addition of isopentenyl diphosphate (IPP) onto dimethylallyl diphosphate (DMAPP) to form geranyl pyrophosphate (GPP). Cannot use farnesyl diphosphate (FPP) or geranylgeranyl diphosphate (GGPP). In Fischerella ambigua (strain UTEX 1903), this protein is Dimethylallyltranstransferase.